The chain runs to 435 residues: YRLTYYTPDYQVSDTDILAAFRMTPQPGVPAEECGAAVAAESSTGTWTTVWTDGLTQLDRYKGRCYDLEPVPGESNQYIAYVAYPIDLFEEGSVTNLLTSIVGNVFGFKALRALRLEDLRIPPAYIKTFWGPPHGIQVERDRLNKYGRPLLGCTIKPKLGLSAKNYGRAVYECLRGGLDFTKDDENVNSQSFMRWRDRFXXXSEAIYKAQSETGEVKGHYLNATAGNVEEMYKRAAFAAQLGVPIVMHDYLTGGFTANTSLSMYCRDNGLLLHIHRAMHAVIDRQRNHGIHFRVLAKTLRMSGGDHLHSGTVVGKLEGEREVTLGFVDLMRDPYVEKDRSRGIYFTQDWCGMGGTMPVASGGIHVWHMPALTEIFGDDACLQFGGGTLGHPWGNAPGAAANRVASEACVQARNEGRDLSREGGDVIREACKWSPE.

Substrate contacts are provided by asparagine 104 and threonine 154. Catalysis depends on lysine 156, which acts as the Proton acceptor. Lysine 158 provides a ligand contact to substrate. The Mg(2+) site is built by lysine 182, aspartate 184, and glutamate 185. Lysine 182 carries the N6-carboxylysine modification. The Proton acceptor role is filled by histidine 275. Substrate is bound by residues arginine 276, histidine 308, and serine 360.

The protein belongs to the RuBisCO large chain family. Type I subfamily. Heterohexadecamer of 8 large chains and 8 small chains. Mg(2+) serves as cofactor.

The protein resides in the plastid. It is found in the chloroplast. The enzyme catalyses 2 (2R)-3-phosphoglycerate + 2 H(+) = D-ribulose 1,5-bisphosphate + CO2 + H2O. It carries out the reaction D-ribulose 1,5-bisphosphate + O2 = 2-phosphoglycolate + (2R)-3-phosphoglycerate + 2 H(+). Its function is as follows. RuBisCO catalyzes two reactions: the carboxylation of D-ribulose 1,5-bisphosphate, the primary event in carbon dioxide fixation, as well as the oxidative fragmentation of the pentose substrate in the photorespiration process. Both reactions occur simultaneously and in competition at the same active site. This is Ribulose bisphosphate carboxylase large chain from Euglena pisciformis.